Consider the following 390-residue polypeptide: S-adenosylmethionine synthase 3 (390 aa).

Glu-9 provides a ligand contact to Mg(2+). ATP is bound at residue His-15. Glu-43 is a K(+) binding site. Residues Glu-56 and Gln-99 each coordinate L-methionine. ATP is bound by residues 167–169, 235–238, Asp-246, 252–253, Ala-269, Lys-273, and Lys-277; these read DGK, SGRF, and RK. Residue Asp-246 coordinates L-methionine. Lys-277 is a binding site for L-methionine.

The protein belongs to the AdoMet synthase family. As to quaternary structure, homotetramer. Mn(2+) is required as a cofactor. Mg(2+) serves as cofactor. The cofactor is Co(2+). Requires K(+) as cofactor. It depends on NH4(+) as a cofactor. In terms of tissue distribution, mostly expressed in roots, and, to a lower extent, in hypocotyls and cotyledons.

The protein resides in the cytoplasm. It carries out the reaction L-methionine + ATP + H2O = S-adenosyl-L-methionine + phosphate + diphosphate. It participates in amino-acid biosynthesis; S-adenosyl-L-methionine biosynthesis; S-adenosyl-L-methionine from L-methionine: step 1/1. With respect to regulation, inhibited by products of SAMS reaction (SAM, Pi, PPi), substrate analogs (cycloleucine and ethionine), and alternative nucleotides (GTP, CTP and ADP). Strongly repressed by PPPi. Its function is as follows. Catalyzes the formation of S-adenosylmethionine from methionine and ATP. The reaction comprises two steps that are both catalyzed by the same enzyme: formation of S-adenosylmethionine (AdoMet) and triphosphate, and subsequent hydrolysis of the triphosphate. The polypeptide is S-adenosylmethionine synthase 3 (SAMS3) (Catharanthus roseus (Madagascar periwinkle)).